A 984-amino-acid polypeptide reads, in one-letter code: Pro-apoptotic serine protease NMA111 (984 aa).

The serine protease stretch occupies residues 51–241; it reads VVSIQFAQVA…LPLNRGKRAL (191 aa). Residues His89, Asp120, and Ser203 each act as charge relay system in the active site. PDZ domains are found at residues 268 to 346 and 756 to 826; these read RRLG…ERNG and PEWI…VRNK.

The protein belongs to the peptidase S1C family.

Its subcellular location is the nucleus. Its function is as follows. Nuclear serine protease which mediates apoptosis. The chain is Pro-apoptotic serine protease NMA111 (NMA111) from Yarrowia lipolytica (strain CLIB 122 / E 150) (Yeast).